A 408-amino-acid polypeptide reads, in one-letter code: Homogentisate geranylgeranyltransferase (408 aa).

The transit peptide at 1-68 (MQATTAAAAA…SAISQATSPR (68 aa)) directs the protein to the chloroplast. 9 helical membrane-spanning segments follow: residues 122–142 (HTIF…MKSI), 149–169 (VLKG…YVVG), 194–214 (SVAT…SIGI), 217–237 (GSVP…AYSI), 248–268 (ALLA…LAFF), 286–306 (LVFA…FKDI), 329–349 (VYQL…VVGA), 352–372 (THLL…LTLW), and 386–406 (VTSF…LIPF).

Belongs to the UbiA prenyltransferase family.

It is found in the plastid. It localises to the chloroplast membrane. It carries out the reaction homogentisate + (2E,6E,10E)-geranylgeranyl diphosphate + H(+) = 6-geranylgeranyl-2-methylbenzene-1,4-diol + CO2 + diphosphate. The protein operates within cofactor biosynthesis; tocopherol biosynthesis. Its function is as follows. Involved in the synthesis of tocotrienol (vitamin E). Catalyzes the condensation of homogentisate and geranylgeranyl diphosphate to form 2-methyl-6-geranylgeranylbenzoquinol. Possesses low activity with phytyl diphosphate as substrate. The polypeptide is Homogentisate geranylgeranyltransferase (Triticum aestivum (Wheat)).